The sequence spans 456 residues: Ribonuclease inhibitor (456 aa).

Met1 is subject to N-acetylmethionine. 15 LRR repeats span residues 15 to 43 (WTELLPLIQQYEVVRLDDCGLTEVRCKDI), 44 to 71 (SSAVQANPALTELSLRTNELGDGGVGLV), 72 to 100 (LQGLQNPTCKIQKLSLQNCGLTEAGCGIL), 101 to 128 (PGMLRSLSTLRELHLNDNPMGDAGLKLL), 129 to 157 (CEGLQDPQCRLEKLQLEYCNLTATSCEPL), 158 to 185 (ASVLRVKADFKELVLSNNDLHEPGVRIL), 186 to 214 (CQGLKDSACQLESLKLENCGITAANCKDL), 215 to 242 (CDVVASKASLQELDLSSNKLGNAGIAAL), 243 to 271 (CPGLLLPSCKLRTLWLWECDITAEGCKDL), 272 to 299 (CRVLRAKQSLKELSLASNELKDEGARLL), 300 to 328 (CESLLEPGCQLESLWIKTCSLTAASCPYF), 329 to 356 (CSVLTKSRSLLELQMSSNPLGDEGVQEL), 357 to 385 (CKALSQPDTVLRELWLGDCDVTNSGCSSL), 386 to 413 (ANVLLANRSLRELDLSNNCMGGPGVLQL), and 414 to 442 (LESLKQPSCTLQQLVLYDIYWTNEVEEQL). Ser86 is modified (phosphoserine).

In terms of assembly, forms high-affinity heterodimers with RNASE1, ANG and RNASE2.

The protein resides in the cytoplasm. The protein localises to the nucleus. Functionally, ribonuclease inhibitor which inhibits RNASE1, RNASE2 and angiogenin (ANG). May play a role in redox homeostasis. Required to inhibit the cytotoxic tRNA ribonuclease activity of ANG in the cytoplasm in absence of stress. Relocates to the nucleus in response to stress, relieving inhibition of ANG in the cytoplasm, and inhibiting the angiogenic activity of ANG in the nucleus. This chain is Ribonuclease inhibitor (Rnh1), found in Mus musculus (Mouse).